A 181-amino-acid chain; its full sequence is MTLIVGLGNPTSKYENTRHNIGFMLIDALKNSNFTDVSSSKFQGELFKYSNLLLLKPTTFMNLSGNSVKAVNDFYKPERIIVIHDDLDLPFGAMKFKKGGSSGGHNGIRSIDTLIGNDYERVRIGIGRSGNAANFVLGEFSPEEKEHLAEILEYGTQAVNELIKSDIESVAQKFTIKKGVL.

Position 14 (Y14) interacts with tRNA. H19 serves as the catalytic Proton acceptor. The tRNA site is built by F60, N62, and N106.

It belongs to the PTH family. In terms of assembly, monomer.

It is found in the cytoplasm. It carries out the reaction an N-acyl-L-alpha-aminoacyl-tRNA + H2O = an N-acyl-L-amino acid + a tRNA + H(+). In terms of biological role, hydrolyzes ribosome-free peptidyl-tRNAs (with 1 or more amino acids incorporated), which drop off the ribosome during protein synthesis, or as a result of ribosome stalling. Functionally, catalyzes the release of premature peptidyl moieties from peptidyl-tRNA molecules trapped in stalled 50S ribosomal subunits, and thus maintains levels of free tRNAs and 50S ribosomes. The protein is Peptidyl-tRNA hydrolase of Campylobacter curvus (strain 525.92).